Here is a 579-residue protein sequence, read N- to C-terminus: General transcriptional corepressor tupA (579 aa).

Positions 83–101 (NINASQRDLNSPSTFRSNS) are enriched in polar residues. Residues 83–258 (NINASQRDLN…ENGKEKGTDW (176 aa)) form a disordered region. Low complexity-rich tracts occupy residues 109–128 (NNNNNNIINNNNNNNNNNNN), 157–198 (QQPG…LSPL), and 207–224 (MGNNMSGNSMSMNNNNNN). Basic and acidic residues predominate over residues 227–256 (KKPDMEEVKEEDRRRHDTEMSEENGKEKGT). 7 WD repeats span residues 279–319 (QHNS…HAFV), 325–364 (DGDLYIRSVCFSPDGNYLATGAEDKTVKVWDIHTKKIQHT), 367–406 (GHELDIYSLDYSSDGRFIVSGSGDKKAKIWDIEKGKCAFT), 413–452 (GPKNGVTSVAMSPDGRLVAAGSLDNIVRLWDAQTGYFLER), 455–494 (GHLDSVYSVAFSPDGKSLASGSLDKSLKLWDLSGSRSRSR), 501–540 (GHKDFVLSVAFSPDGSWLISGSKDRSVQFWDPRNGTTHMM), and 543–579 (GHKNSVISVALSPKNNSHGVFATGSGDFRSRLWKYDS).

It belongs to the WD repeat TUP1 family. In terms of assembly, associates with trfA to form the trfA-tupA corepressor complex.

Its subcellular location is the nucleus. Functionally, acts as a component of the trfA-tupA corepressor complex which is involved in the repression of many genes in a wide variety of physiological processes. May also be involved in the derepression of at least some target genes. The complex is recruited to target genes by interaction with DNA-bound transcriptional repressors. The complex recruits histone deacetylases to produce a repressive chromatin structure, interacts with hypoacetylated N-terminal tails of histones H3 and H4 that have been programmed for repression by the action of histone deacetylases and interferes directly with the transcriptional machinery by associating with the RNA polymerase II mediator complex. The chain is General transcriptional corepressor tupA (tupA) from Dictyostelium discoideum (Social amoeba).